The chain runs to 327 residues: Probable cell division protein WhiA (327 aa).

A DNA-binding region (H-T-H motif) is located at residues 277–310 (EELGRLADPPMTKDAVAGRIRRLLSMADRKAKQD). A disordered region spans residues 304 to 327 (DRKAKQDGIPDTESAVTPDLLEDA).

It belongs to the WhiA family.

Its function is as follows. Involved in cell division and chromosome segregation. This is Probable cell division protein WhiA from Mycolicibacterium vanbaalenii (strain DSM 7251 / JCM 13017 / BCRC 16820 / KCTC 9966 / NRRL B-24157 / PYR-1) (Mycobacterium vanbaalenii).